The chain runs to 216 residues: Peptide methionine sulfoxide reductase MsrA (216 aa).

The active site involves C54.

This sequence belongs to the MsrA Met sulfoxide reductase family.

The enzyme catalyses L-methionyl-[protein] + [thioredoxin]-disulfide + H2O = L-methionyl-(S)-S-oxide-[protein] + [thioredoxin]-dithiol. It catalyses the reaction [thioredoxin]-disulfide + L-methionine + H2O = L-methionine (S)-S-oxide + [thioredoxin]-dithiol. Its function is as follows. Has an important function as a repair enzyme for proteins that have been inactivated by oxidation. Catalyzes the reversible oxidation-reduction of methionine sulfoxide in proteins to methionine. The chain is Peptide methionine sulfoxide reductase MsrA from Xanthomonas campestris pv. phaseoli.